A 258-amino-acid chain; its full sequence is Phosphoadenosine 5'-phosphosulfate reductase (258 aa).

The Nucleophile; cysteine thiosulfonate intermediate role is filled by Cys-244.

The protein belongs to the PAPS reductase family. CysH subfamily.

It localises to the cytoplasm. The enzyme catalyses [thioredoxin]-disulfide + sulfite + adenosine 3',5'-bisphosphate + 2 H(+) = [thioredoxin]-dithiol + 3'-phosphoadenylyl sulfate. It participates in sulfur metabolism; hydrogen sulfide biosynthesis; sulfite from sulfate: step 3/3. Functionally, catalyzes the formation of sulfite from phosphoadenosine 5'-phosphosulfate (PAPS) using thioredoxin as an electron donor. This Vibrio atlanticus (strain LGP32) (Vibrio splendidus (strain Mel32)) protein is Phosphoadenosine 5'-phosphosulfate reductase.